The primary structure comprises 161 residues: Large ribosomal subunit protein uL10 (161 aa).

Belongs to the universal ribosomal protein uL10 family. In terms of assembly, part of the ribosomal stalk of the 50S ribosomal subunit. The N-terminus interacts with L11 and the large rRNA to form the base of the stalk. The C-terminus forms an elongated spine to which L12 dimers bind in a sequential fashion forming a multimeric L10(L12)X complex.

In terms of biological role, forms part of the ribosomal stalk, playing a central role in the interaction of the ribosome with GTP-bound translation factors. The sequence is that of Large ribosomal subunit protein uL10 (rplJ) from Mycoplasma pneumoniae (strain ATCC 29342 / M129 / Subtype 1) (Mycoplasmoides pneumoniae).